The sequence spans 534 residues: EH domain-containing protein 1 (534 aa).

M1 is subject to N-acetylmethionine. The Dynamin-type G domain occupies 55-286 (FDNKPMVLLV…DLFKDIQSLP (232 aa)). A G1 motif region spans residues 65–72 (GQYSTGKT). Position 65–72 (65–72 (GQYSTGKT)) interacts with ATP. The tract at residues 91 to 92 (EP) is G2 motif. A G3 motif region spans residues 153–156 (DTPG). Positions 198-227 (DEFSEVIKALKNHEDKIRVVLNKADQIETQ) form a coiled coil. The segment at 219–222 (NKAD) is G4 motif. Residue K220 coordinates ATP. A region of interest (G5 motif) is located at residue I243. W258 serves as a coordination point for ATP. Residues S355 and S456 each carry the phosphoserine modification. An EH domain is found at 444-532 (DKPTYDEIFY…PHLIPPSKRR (89 aa)). In terms of domain architecture, EF-hand spans 476 to 511 (LPNTVLGKIWKLADVDKDGLLDDEEFALANHLIKVK). D489, D491, D493, and E500 together coordinate Ca(2+).

This sequence belongs to the TRAFAC class dynamin-like GTPase superfamily. Dynamin/Fzo/YdjA family. EHD subfamily. As to quaternary structure, homooligomer, and heterooligomer with EHD2, EHD3 and EHD4, ATP-binding is required for heterooligomerization. Interacts (via EH domain) with MICALL1 (via NPF1 motif); the interaction is direct and recruits EHD1 to membranes. Interacts with RAB35; the interaction is indirect through MICALL1 and recruits EHD1 to membranes. Interacts (via EH domain) with PACSIN2 (via NPF motifs); regulates localization to tubular recycling endosome membranes. Interacts with PACSIN1. Interacts with RAB8A. Interacts with FER1L5 (via second C2 domain). Interacts with MYOF. Interacts with ZFYVE20. Interacts (via EH domain) with RAB11FIP2.

The protein localises to the recycling endosome membrane. It is found in the early endosome membrane. The protein resides in the cell membrane. Its subcellular location is the cell projection. It localises to the cilium membrane. Its function is as follows. ATP- and membrane-binding protein that controls membrane reorganization/tubulation upon ATP hydrolysis. In vitro causes vesiculation of endocytic membranes. Acts in early endocytic membrane fusion and membrane trafficking of recycling endosomes. Recruited to endosomal membranes upon nerve growth factor stimulation, indirectly regulates neurite outgrowth. Plays a role in myoblast fusion. Involved in the unidirectional retrograde dendritic transport of endocytosed BACE1 and in efficient sorting of BACE1 to axons implicating a function in neuronal APP processing. Plays a role in the formation of the ciliary vesicle (CV), an early step in cilium biogenesis. Proposed to be required for the fusion of distal appendage vesicles (DAVs) to form the CV by recruiting SNARE complex component SNAP29. Is required for recruitment of transition zone proteins CEP290, RPGRIP1L, TMEM67 and B9D2, and of IFT20 following DAV reorganization before Rab8-dependent ciliary membrane extension. Required for the loss of CCP110 form the mother centriole essential for the maturation of the basal body during ciliogenesis. The chain is EH domain-containing protein 1 from Rattus norvegicus (Rat).